A 133-amino-acid polypeptide reads, in one-letter code: Holo-[acyl-carrier-protein] synthase (133 aa).

Residues aspartate 8 and glutamate 64 each coordinate Mg(2+).

Belongs to the P-Pant transferase superfamily. AcpS family. The cofactor is Mg(2+).

It localises to the cytoplasm. It carries out the reaction apo-[ACP] + CoA = holo-[ACP] + adenosine 3',5'-bisphosphate + H(+). Its function is as follows. Transfers the 4'-phosphopantetheine moiety from coenzyme A to a Ser of acyl-carrier-protein. The chain is Holo-[acyl-carrier-protein] synthase from Shewanella loihica (strain ATCC BAA-1088 / PV-4).